Here is a 217-residue protein sequence, read N- to C-terminus: Carboxylesterase Culp1 (217 aa).

The first 32 residues, 1 to 32 (MTPRSLVRIVGVVVATTLALVSAPAGGRAAHA), serve as a signal peptide directing secretion. Residues cysteine 35 and cysteine 107 are joined by a disulfide bond. Residue serine 118 is the Nucleophile of the active site. Cysteine 177 and cysteine 184 are joined by a disulfide. Aspartate 181 is an active-site residue. The active-site Proton donor/acceptor is the histidine 193.

It belongs to the cutinase family.

It is found in the secreted. The enzyme catalyses a fatty acid ester + H2O = an aliphatic alcohol + a fatty acid + H(+). In terms of biological role, shows esterase activity, with a preference for short- and medium-chain fatty acids. The protein is Carboxylesterase Culp1 of Mycobacterium bovis (strain ATCC BAA-935 / AF2122/97).